Here is a 294-residue protein sequence, read N- to C-terminus: MASLKALKVRITSVKSTQKITKAMKMVAAAKLRRAQMAAEAGRPYAERLDAVMSSLASKVTVGPQSPKLLAGTGNDQVHLLVVATSERGLAGAFNTNIVRAARKTADSLIAQGKTVKFYLIGKKGRAVLQRLFPGKIVHQVDQSHIKNVAFSDAHMVAEDLIGRYSAGEFDVAHLFFAKFQSALVQEPTELQIIPVPLTADTGAAATGASAAVEYEPDEEAILTELLPRNVAVQLFRAMLENAASEQGSRMTAMDNATRNAGEMINKLTIQYNRTRQAAITTELIEIIAGAEAL.

Belongs to the ATPase gamma chain family. In terms of assembly, F-type ATPases have 2 components, CF(1) - the catalytic core - and CF(0) - the membrane proton channel. CF(1) has five subunits: alpha(3), beta(3), gamma(1), delta(1), epsilon(1). CF(0) has three main subunits: a, b and c.

It localises to the cell inner membrane. Produces ATP from ADP in the presence of a proton gradient across the membrane. The gamma chain is believed to be important in regulating ATPase activity and the flow of protons through the CF(0) complex. The protein is ATP synthase gamma chain of Rhizorhabdus wittichii (strain DSM 6014 / CCUG 31198 / JCM 15750 / NBRC 105917 / EY 4224 / RW1) (Sphingomonas wittichii).